The following is a 206-amino-acid chain: GTP cyclohydrolase 1 (206 aa).

Zn(2+) contacts are provided by Cys-95, His-98, and Cys-166.

Belongs to the GTP cyclohydrolase I family. Toroid-shaped homodecamer, composed of two pentamers of five dimers.

It catalyses the reaction GTP + H2O = 7,8-dihydroneopterin 3'-triphosphate + formate + H(+). The protein operates within cofactor biosynthesis; 7,8-dihydroneopterin triphosphate biosynthesis; 7,8-dihydroneopterin triphosphate from GTP: step 1/1. The sequence is that of GTP cyclohydrolase 1 from Bartonella quintana (strain Toulouse) (Rochalimaea quintana).